Reading from the N-terminus, the 177-residue chain is Putative HVA22-like protein g (177 aa).

A disordered region spans residues 145–165; sequence QSTPKSKAEEKKETTIPKLDD. The span at 150–165 shows a compositional bias: basic and acidic residues; it reads SKAEEKKETTIPKLDD.

This sequence belongs to the DP1 family.

The sequence is that of Putative HVA22-like protein g (HVA22G) from Arabidopsis thaliana (Mouse-ear cress).